The primary structure comprises 423 residues: COP9 signalosome complex subunit 3 (423 aa).

The region spanning 197–365 (NFERALYFYE…GMVCFHDNPE (169 aa)) is the PCI domain. A disordered region spans residues 402 to 423 (QFVQKSMGSQEDDSGTKPSSYS).

Belongs to the CSN3 family. As to quaternary structure, component of the CSN complex, probably composed of COPS1, COPS2, COPS3, COPS4, COPS5, COPS6, COPS7, COPS8 and COPS9.

The protein resides in the cytoplasm. It is found in the nucleus. Functionally, component of the COP9 signalosome complex (CSN), a complex involved in various cellular and developmental processes. The CSN complex is an essential regulator of the ubiquitin (Ubl) conjugation pathway by mediating the deneddylation of the cullin subunits of E3 ligase complexes, leading to modify the Ubl ligase activity. The protein is COP9 signalosome complex subunit 3 (COPS3) of Gallus gallus (Chicken).